A 164-amino-acid chain; its full sequence is MYFPMIELTLVLLASSNLAMSVRKEIRAPQTLSRGWGDDISWVQTYEEGLYNAKKRNKPLMVIHHLEDCQYCQALKKVFAESDEAQTLAQEQFIMLNLMHETTDKNLSPDGQYVPRIMFIDPTLTVRADITGRYSNRRYTYEPQDLPLLIENMNKAIHLLQTEL.

The first 19 residues, 1-19 (MYFPMIELTLVLLASSNLA), serve as a signal peptide directing secretion. A Prevents secretion from ER motif is present at residues 161 to 164 (QTEL).

Belongs to the AGR family.

It is found in the endoplasmic reticulum. The protein localises to the cytoplasm. Its function is as follows. Required for calcium-mediated regulation of ciliary beat frequency in the airway. The polypeptide is Anterior gradient protein 3 (Xenopus tropicalis (Western clawed frog)).